Consider the following 232-residue polypeptide: Putative N-acetylmannosamine-6-phosphate 2-epimerase (232 aa).

Belongs to the NanE family.

The enzyme catalyses an N-acyl-D-glucosamine 6-phosphate = an N-acyl-D-mannosamine 6-phosphate. It participates in amino-sugar metabolism; N-acetylneuraminate degradation; D-fructose 6-phosphate from N-acetylneuraminate: step 3/5. Its function is as follows. Converts N-acetylmannosamine-6-phosphate (ManNAc-6-P) to N-acetylglucosamine-6-phosphate (GlcNAc-6-P). This is Putative N-acetylmannosamine-6-phosphate 2-epimerase from Synechococcus elongatus (strain ATCC 33912 / PCC 7942 / FACHB-805) (Anacystis nidulans R2).